We begin with the raw amino-acid sequence, 471 residues long: Glutamate--tRNA ligase (471 aa).

A 'HIGH' region motif is present at residues 9–19 (PSPTGFLHVGG). 4 residues coordinate Zn(2+): Cys-98, Cys-100, Cys-125, and Asp-127. The short motif at 237–241 (KLSKR) is the 'KMSKS' region element. Lys-240 is an ATP binding site.

This sequence belongs to the class-I aminoacyl-tRNA synthetase family. Glutamate--tRNA ligase type 1 subfamily. As to quaternary structure, monomer. It depends on Zn(2+) as a cofactor.

It localises to the cytoplasm. It carries out the reaction tRNA(Glu) + L-glutamate + ATP = L-glutamyl-tRNA(Glu) + AMP + diphosphate. Catalyzes the attachment of glutamate to tRNA(Glu) in a two-step reaction: glutamate is first activated by ATP to form Glu-AMP and then transferred to the acceptor end of tRNA(Glu). This is Glutamate--tRNA ligase from Aeromonas hydrophila subsp. hydrophila (strain ATCC 7966 / DSM 30187 / BCRC 13018 / CCUG 14551 / JCM 1027 / KCTC 2358 / NCIMB 9240 / NCTC 8049).